Here is a 118-residue protein sequence, read N- to C-terminus: Large ribosomal subunit protein eL22 (118 aa).

The protein belongs to the eukaryotic ribosomal protein eL22 family.

This Tetrahymena thermophila (strain SB210) protein is Large ribosomal subunit protein eL22 (RPL22).